A 394-amino-acid polypeptide reads, in one-letter code: Putative pectate lyase 17 (394 aa).

An N-terminal signal peptide occupies residues 1–22 (MTHFTVSCLLVALFLCQSLVHA). Asp192, Asp216, and Asp220 together coordinate Ca(2+). Residue Arg272 is part of the active site.

The protein belongs to the polysaccharide lyase 1 family. Ca(2+) serves as cofactor.

The catalysed reaction is Eliminative cleavage of (1-&gt;4)-alpha-D-galacturonan to give oligosaccharides with 4-deoxy-alpha-D-galact-4-enuronosyl groups at their non-reducing ends.. Its pathway is glycan metabolism; pectin degradation; 2-dehydro-3-deoxy-D-gluconate from pectin: step 2/5. This chain is Putative pectate lyase 17, found in Arabidopsis thaliana (Mouse-ear cress).